Here is a 406-residue protein sequence, read N- to C-terminus: Phosphopentomutase (406 aa).

Mn(2+) is bound by residues D10, D305, H310, D346, H347, and H358.

Belongs to the phosphopentomutase family. Mn(2+) serves as cofactor.

It localises to the cytoplasm. It catalyses the reaction 2-deoxy-alpha-D-ribose 1-phosphate = 2-deoxy-D-ribose 5-phosphate. The enzyme catalyses alpha-D-ribose 1-phosphate = D-ribose 5-phosphate. It functions in the pathway carbohydrate degradation; 2-deoxy-D-ribose 1-phosphate degradation; D-glyceraldehyde 3-phosphate and acetaldehyde from 2-deoxy-alpha-D-ribose 1-phosphate: step 1/2. In terms of biological role, isomerase that catalyzes the conversion of deoxy-ribose 1-phosphate (dRib-1-P) and ribose 1-phosphate (Rib-1-P) to deoxy-ribose 5-phosphate (dRib-5-P) and ribose 5-phosphate (Rib-5-P), respectively. This is Phosphopentomutase from Sinorhizobium medicae (strain WSM419) (Ensifer medicae).